The chain runs to 141 residues: Large ribosomal subunit protein uL16 (141 aa).

Belongs to the universal ribosomal protein uL16 family. As to quaternary structure, part of the 50S ribosomal subunit.

In terms of biological role, binds 23S rRNA and is also seen to make contacts with the A and possibly P site tRNAs. This chain is Large ribosomal subunit protein uL16, found in Rhodospirillum centenum (strain ATCC 51521 / SW).